The following is a 310-amino-acid chain: tRNA dimethylallyltransferase (310 aa).

Residue 9–16 (GPTAVGKT) coordinates ATP. 11 to 16 (TAVGKT) provides a ligand contact to substrate. An interaction with substrate tRNA region spans residues 34–37 (DSMQ).

The protein belongs to the IPP transferase family. Monomer. It depends on Mg(2+) as a cofactor.

It catalyses the reaction adenosine(37) in tRNA + dimethylallyl diphosphate = N(6)-dimethylallyladenosine(37) in tRNA + diphosphate. Its function is as follows. Catalyzes the transfer of a dimethylallyl group onto the adenine at position 37 in tRNAs that read codons beginning with uridine, leading to the formation of N6-(dimethylallyl)adenosine (i(6)A). The sequence is that of tRNA dimethylallyltransferase from Pediococcus pentosaceus (strain ATCC 25745 / CCUG 21536 / LMG 10740 / 183-1w).